The following is a 558-amino-acid chain: Glucose-6-phosphate isomerase (558 aa).

Residue Glu362 is the Proton donor of the active site. Catalysis depends on residues His393 and Lys523.

The protein belongs to the GPI family.

It is found in the cytoplasm. It carries out the reaction alpha-D-glucose 6-phosphate = beta-D-fructose 6-phosphate. The protein operates within carbohydrate degradation; glycolysis; D-glyceraldehyde 3-phosphate and glycerone phosphate from D-glucose: step 2/4. In Drosophila simulans (Fruit fly), this protein is Glucose-6-phosphate isomerase (Pgi).